Here is a 505-residue protein sequence, read N- to C-terminus: Pup deamidase/depupylase (505 aa).

ATP is bound at residue 6-10 (GTEVE). 2 residues coordinate Mg(2+): Glu8 and Tyr93. The active-site Proton acceptor is the Asp95. Residue Glu100 coordinates Mg(2+). 102–103 (SA) contributes to the ATP binding site. His156 lines the Mg(2+) pocket. ATP-binding residues include Asn158 and Arg240. Residue His242 coordinates Mg(2+).

Belongs to the Pup ligase/Pup deamidase family. Pup deamidase subfamily. As to quaternary structure, interacts with the prokaryotic ubiquitin-like protein Pup. ATP serves as cofactor.

The enzyme catalyses [prokaryotic ubiquitin-like protein]-C-terminal-L-glutamine + H2O = [prokaryotic ubiquitin-like protein]-C-terminal-L-glutamate + NH4(+). The protein operates within protein degradation; proteasomal Pup-dependent pathway. Specifically catalyzes the deamidation of the C-terminal glutamine of the prokaryotic ubiquitin-like protein Pup to glutamate, thereby rendering Pup competent for conjugation. Also displays depupylase (DPUP) activity, removing conjugated Pup from target proteins; is thus involved in the recycling of Pup and may function similarly to deubiquitinases (DUBs) in eukaryotes to prevent or promote proteasomal degradation of certain proteins. The protein is Pup deamidase/depupylase (dop) of Mycobacterium tuberculosis (strain CDC 1551 / Oshkosh).